The following is a 120-amino-acid chain: Ribonuclease P protein component (120 aa).

It belongs to the RnpA family. Consists of a catalytic RNA component (M1 or rnpB) and a protein subunit.

The enzyme catalyses Endonucleolytic cleavage of RNA, removing 5'-extranucleotides from tRNA precursor.. RNaseP catalyzes the removal of the 5'-leader sequence from pre-tRNA to produce the mature 5'-terminus. It can also cleave other RNA substrates such as 4.5S RNA. The protein component plays an auxiliary but essential role in vivo by binding to the 5'-leader sequence and broadening the substrate specificity of the ribozyme. The polypeptide is Ribonuclease P protein component (Microcystis aeruginosa (strain NIES-843 / IAM M-2473)).